The following is a 344-amino-acid chain: Aurora kinase B (344 aa).

The disordered stretch occupies residues 1 to 22 (MAQKENSYPWPYGRQTAPSGLS). A Phosphothreonine modification is found at Thr35. Residue Ser62 is modified to Phosphoserine. Phosphothreonine is present on Thr64. The 251-residue stretch at 77–327 (FEIGRPLGKG…LAQVSAHPWV (251 aa)) folds into the Protein kinase domain. ATP contacts are provided by residues 83–91 (LGKGKFGNV) and Lys106. The active-site Proton acceptor is the Asp200. Position 215 is an N6-acetyllysine (Lys215). Ser227 is subject to Phosphoserine. Position 232 is a phosphothreonine; by autocatalysis (Thr232).

The protein belongs to the protein kinase superfamily. Ser/Thr protein kinase family. Aurora subfamily. Component of the chromosomal passenger complex (CPC) composed of at least BIRC5/survivin, CDCA8/borealin, INCENP, AURKB or AURKC; predominantly independent AURKB- and AURKC-containing complexes exist. Associates with RACGAP1 during M phase. Interacts with SPDYC; this interaction may be required for proper localization of active, Thr-232-phosphorylated AURKB form during prometaphase and metaphase. Interacts with p53/TP53. Interacts (via the middle kinase domain) with NOC2L (via the N- and C-terminus domains). Interacts with CDCA1. Interacts with EVI5. Interacts with JTB. Interacts with NDC80. Interacts with PSMA3. Interacts with RNF2/RING1B. Interacts with SEPTIN1. Interacts with SIRT2. Interacts with TACC1. Interacts with TTC28. Post-translationally, the phosphorylation of Thr-232 requires the binding to INCENP and occurs by means of an autophosphorylation mechanism. Thr-232 phosphorylation is indispensable for the AURKB kinase activity. In terms of processing, acetylated at Lys-215 by KAT5 at kinetochores, increasing AURKB activity and promoting accurate chromosome segregation in mitosis. Ubiquitinated by different BCR (BTB-CUL3-RBX1) E3 ubiquitin ligase complexes. Ubiquitinated by the BCR(KLHL9-KLHL13) E3 ubiquitin ligase complex, ubiquitination leads to removal from mitotic chromosomes and is required for cytokinesis. During anaphase, the BCR(KLHL21) E3 ubiquitin ligase complex recruits the CPC complex from chromosomes to the spindle midzone and mediates the ubiquitination of AURKB. Ubiquitination of AURKB by BCR(KLHL21) E3 ubiquitin ligase complex may not lead to its degradation by the proteasome. Deubiquitinated by USP35; inhibiting CDH1-mediated degradation of AURKB. In terms of tissue distribution, high level expression seen in the thymus. It is also expressed in the spleen, lung, testis, colon, placenta and fetal liver. Expressed during S and G2/M phase and expression is up-regulated in cancer cells during M phase. Not expressed in normal liver, high expression in metastatic liver.

The protein localises to the nucleus. The protein resides in the chromosome. It localises to the centromere. It is found in the kinetochore. Its subcellular location is the cytoplasm. The protein localises to the cytoskeleton. The protein resides in the spindle. It localises to the midbody. It carries out the reaction L-seryl-[protein] + ATP = O-phospho-L-seryl-[protein] + ADP + H(+). It catalyses the reaction L-threonyl-[protein] + ATP = O-phospho-L-threonyl-[protein] + ADP + H(+). With respect to regulation, activity is greatly increased when AURKB is within the CPC complex. In particular, AURKB-phosphorylated INCENP acts as an activator of AURKB. Positive feedback between HASPIN and AURKB contributes to CPC localization. Inhibited by ZM447439. In terms of biological role, serine/threonine-protein kinase component of the chromosomal passenger complex (CPC), a complex that acts as a key regulator of mitosis. The CPC complex has essential functions at the centromere in ensuring correct chromosome alignment and segregation and is required for chromatin-induced microtubule stabilization and spindle assembly. Involved in the bipolar attachment of spindle microtubules to kinetochores and is a key regulator for the onset of cytokinesis during mitosis. Required for central/midzone spindle assembly and cleavage furrow formation. Key component of the cytokinesis checkpoint, a process required to delay abscission to prevent both premature resolution of intercellular chromosome bridges and accumulation of DNA damage: phosphorylates CHMP4C, leading to retain abscission-competent VPS4 (VPS4A and/or VPS4B) at the midbody ring until abscission checkpoint signaling is terminated at late cytokinesis. AURKB phosphorylates the CPC complex subunits BIRC5/survivin, CDCA8/borealin and INCENP. Phosphorylation of INCENP leads to increased AURKB activity. Other known AURKB substrates involved in centromeric functions and mitosis are CENPA, DES/desmin, GPAF, KIF2C, NSUN2, RACGAP1, SEPTIN1, VIM/vimentin, HASPIN, and histone H3. A positive feedback loop involving HASPIN and AURKB contributes to localization of CPC to centromeres. Phosphorylation of VIM controls vimentin filament segregation in cytokinetic process, whereas histone H3 is phosphorylated at 'Ser-10' and 'Ser-28' during mitosis (H3S10ph and H3S28ph, respectively). AURKB is also required for kinetochore localization of BUB1 and SGO1. Phosphorylation of p53/TP53 negatively regulates its transcriptional activity. Key regulator of active promoters in resting B- and T-lymphocytes: acts by mediating phosphorylation of H3S28ph at active promoters in resting B-cells, inhibiting RNF2/RING1B-mediated ubiquitination of histone H2A and enhancing binding and activity of the USP16 deubiquitinase at transcribed genes. Acts as an inhibitor of CGAS during mitosis: catalyzes phosphorylation of the N-terminus of CGAS during the G2-M transition, blocking CGAS liquid phase separation and activation, and thereby preventing CGAS-induced autoimmunity. Phosphorylates KRT5 during anaphase and telophase. Phosphorylates ATXN10 which promotes phosphorylation of ATXN10 by PLK1 and may play a role in the regulation of cytokinesis and stimulating the proteasomal degradation of ATXN10. The sequence is that of Aurora kinase B (AURKB) from Homo sapiens (Human).